We begin with the raw amino-acid sequence, 462 residues long: Retinoic acid receptor RXR-alpha (462 aa).

The tract at residues 1 to 107 is disordered; that stretch reads MDTKHFLPLD…MNPVSSSEDI (107 aa). The segment at 1 to 134 is modulating; that stretch reads MDTKHFLPLD…GNMASFTKHI (134 aa). K4 is covalently cross-linked (Glycyl lysine isopeptide (Lys-Gly) (interchain with G-Cter in SUMO2)). Residues 11 to 24 are compositionally biased toward polar residues; it reads FSTQVNSSLTSPTG. Phosphoserine is present on residues S21 and S27. Polar residues predominate over residues 49 to 58; sequence SPISTLSSPI. Phosphoserine; by MAPK8 and MAPK9 is present on residues S56 and S70. The segment covering 78-104 has biased composition (polar residues); sequence SVPTTPTLGFSTGSPQLSSPMNPVSSS. T82 is modified (phosphothreonine; by MAPK8 and MAPK9). K108 is covalently cross-linked (Glycyl lysine isopeptide (Lys-Gly) (interchain with G-Cter in SUMO)). At S129 the chain carries Phosphoserine. 2 residues coordinate Zn(2+): C135 and C138. The NR C4-type zinc finger occupies 135-155; sequence CAICGDRSSGKHYGVYSCEGC. Positions 135–200 form a DNA-binding region, nuclear receptor; that stretch reads CAICGDRSSG…RYQKCLAMGM (66 aa). K145 carries the N6-acetyllysine; by EP300 modification. Zn(2+) is bound by residues C152 and C155. The nuclear localization signal stretch occupies residues 160–165; that stretch reads KRTVRK. Zn(2+) is bound by residues C171, C177, C187, and C190. The segment at 171-195 adopts an NR C4-type zinc-finger fold; that stretch reads CRDNKDCLIDKRQRNRCQYCRYQKC. The interval 201–224 is hinge; the sequence is KREAVQEERQRGKDRNENEVESTS. The span at 206-218 shows a compositional bias: basic and acidic residues; that stretch reads QEERQRGKDRNEN. Residues 206-228 are disordered; the sequence is QEERQRGKDRNENEVESTSSANE. The region spanning 227 to 458 is the NR LBD domain; it reads NEDMPVERIL…TFLMEMLEAP (232 aa). The residue at position 259 (S259) is a Phosphoserine. Phosphoserine; by MAPK8 and MAPK9 is present on S260. 9-cis-retinoate-binding residues include R316 and A327. Residues R316 and A327 each contribute to the all-trans-retinoate site. The tract at residues 348-368 is required for nuclear export; sequence RVLTELVSKMRDMQMDKTELG.

It belongs to the nuclear hormone receptor family. NR2 subfamily. Homodimer. Heterodimer (via C-terminus) with RARA; required for ligand-dependent retinoic acid receptor transcriptional activity; association with RARA is enhanced by pulsatile shear stress. Heterodimer with PPARA (via the leucine-like zipper in the LBD); the interaction is required for PPARA transcriptional activity. Heterodimerizes with PPARG. Heterodimerizes (via NR LBD) with RARB. Heterodimerizes with NR1H4; the heterodimerization enhances the binding affinity for LXXLL motifs from coactivators. Interacts with NCOA3 and NCOA6 coactivators. Interacts with coactivator FAM120B. Interacts with coactivator PELP1, SENP6, SFPQ, DNTTIP2 and RNF8. Interacts with PRMT2. Interacts with ASXL1. Interacts with BHLHE40/DEC1, BHLHE41/DEC2, NCOR1 and NCOR2. Interacts in a ligand-dependent fashion with MED1 and NCOA1. Interacts with VDR. Interacts with EP300; the interaction is decreased by 9-cis retinoic acid. Heterodimer (via C-terminus) with NR4A1 (via DNA-binding domain); DNA-binding of the heterodimer is enhanced by 9-cis retinoic acid. NR4A1 competes with EP300 for interaction with RXRA and thereby attenuates EP300 mediated acetylation of RXRA. In the absence of hormonal ligand, interacts with TACC1. Interacts ith IGFBP3. As to quaternary structure, (Microbial infection) Interacts (via the DNA binding domain) with HCV core protein; the interaction enhances the transcriptional activities of the RXRA/RARA and the RXRA/PPARA heterodimers. In terms of processing, acetylated by EP300; acetylation enhances DNA binding and transcriptional activity. Phosphorylated on serine and threonine residues mainly in the N-terminal modulating domain. Constitutively phosphorylated on Ser-21 in the presence or absence of ligand. Under stress conditions, hyperphosphorylated by activated JNK on Ser-56, Ser-70, Thr-82 and Ser-260. Phosphorylated on Ser-27, in vitro, by PKA. This phosphorylation is required for repression of cAMP-mediated transcriptional activity of RARA. Post-translationally, ubiquitinated by UBR5, leading to its degradation: UBR5 specifically recognizes and binds ligand-bound RXRA when it is not associated with coactivators (NCOAs). In presence of NCOAs, the UBR5-degron is not accessible, preventing its ubiquitination and degradation. In terms of processing, sumoylation negatively regulates transcriptional activity. Desumoylated specifically by SENP6. Expressed in lung fibroblasts (at protein level). Expressed in monocytes. Highly expressed in liver, also found in kidney and brain.

The protein resides in the nucleus. The protein localises to the cytoplasm. Its subcellular location is the mitochondrion. Functionally, receptor for retinoic acid that acts as a transcription factor. Forms homo- or heterodimers with retinoic acid receptors (RARs) and binds to target response elements in response to their ligands, all-trans or 9-cis retinoic acid, to regulate gene expression in various biological processes. The RAR/RXR heterodimers bind to the retinoic acid response elements (RARE) composed of tandem 5'-AGGTCA-3' sites known as DR1-DR5 to regulate transcription. The high affinity ligand for retinoid X receptors (RXRs) is 9-cis retinoic acid. In the absence of ligand, the RXR-RAR heterodimers associate with a multiprotein complex containing transcription corepressors that induce histone deacetylation, chromatin condensation and transcriptional suppression. On ligand binding, the corepressors dissociate from the receptors and coactivators are recruited leading to transcriptional activation. Serves as a common heterodimeric partner for a number of nuclear receptors, such as RARA, RARB and PPARA. The RXRA/RARB heterodimer can act as a transcriptional repressor or transcriptional activator, depending on the RARE DNA element context. The RXRA/PPARA heterodimer is required for PPARA transcriptional activity on fatty acid oxidation genes such as ACOX1 and the P450 system genes. Together with RARA, positively regulates microRNA-10a expression, thereby inhibiting the GATA6/VCAM1 signaling response to pulsatile shear stress in vascular endothelial cells. Acts as an enhancer of RARA binding to RARE DNA element. May facilitate the nuclear import of heterodimerization partners such as VDR and NR4A1. Promotes myelin debris phagocytosis and remyelination by macrophages. Plays a role in the attenuation of the innate immune system in response to viral infections, possibly by negatively regulating the transcription of antiviral genes such as type I IFN genes. Involved in the regulation of calcium signaling by repressing ITPR2 gene expression, thereby controlling cellular senescence. In Homo sapiens (Human), this protein is Retinoic acid receptor RXR-alpha (RXRA).